We begin with the raw amino-acid sequence, 387 residues long: Proline-rich protein 5 (387 aa).

Interaction with RICTOR stretches follow at residues 10 to 96 (MSSP…LTKG) and 189 to 219 (HESRGVTEDYLRLETLIQKVVSPYLGTYGLY). The tract at residues 11 to 33 (SSPSLSDLGKREPGAAGADERGT) is disordered. The span at 18–33 (LGKREPGAAGADERGT) shows a compositional bias: basic and acidic residues. Phosphoserine is present on Ser253. Disordered stretches follow at residues 262 to 347 (NPVA…PETL) and 365 to 387 (DFGRGSRSSVSDFEAAGGRPSVV). A compositionally biased stretch (low complexity) spans 310–321 (SSPSPHSGPCPS). At Ser373 the chain carries Phosphoserine.

The protein belongs to the PROTOR family. In terms of assembly, associated component of the mechanistic target of rapamycin complex 2 (mTORC2). Binds directly to MTOR and RICTOR within the TORC2 complex.

Functionally, associated subunit of mTORC2, which regulates cell growth and survival in response to hormonal signals. mTORC2 is activated by growth factors, but, in contrast to mTORC1, seems to be nutrient-insensitive. mTORC2 seems to function upstream of Rho GTPases to regulate the actin cytoskeleton, probably by activating one or more Rho-type guanine nucleotide exchange factors. PRR5 plays an important role in regulation of PDGFRB expression and in modulation of platelet-derived growth factor signaling. May act as a tumor suppressor in breast cancer. The sequence is that of Proline-rich protein 5 from Rattus norvegicus (Rat).